The chain runs to 244 residues: Geranylgeranylglyceryl phosphate synthase (244 aa).

Residues D21 and T50 each coordinate Mg(2+). Sn-glycerol 1-phosphate-binding positions include 168-174, 200-201, and 222-223; these read YLEAGSG, GG, and GN.

It belongs to the GGGP/HepGP synthase family. Group II subfamily. Requires Mg(2+) as cofactor.

Its subcellular location is the cytoplasm. The catalysed reaction is sn-glycerol 1-phosphate + (2E,6E,10E)-geranylgeranyl diphosphate = sn-3-O-(geranylgeranyl)glycerol 1-phosphate + diphosphate. Its pathway is membrane lipid metabolism; glycerophospholipid metabolism. In terms of biological role, prenyltransferase that catalyzes the transfer of the geranylgeranyl moiety of geranylgeranyl diphosphate (GGPP) to the C3 hydroxyl of sn-glycerol-1-phosphate (G1P). This reaction is the first ether-bond-formation step in the biosynthesis of archaeal membrane lipids. The protein is Geranylgeranylglyceryl phosphate synthase of Sulfurisphaera tokodaii (strain DSM 16993 / JCM 10545 / NBRC 100140 / 7) (Sulfolobus tokodaii).